Consider the following 61-residue polypeptide: MFSELINFQNEGHECQCQCGSCKNNEQCQKSCSCPTGCNSDDKCPCGNKSEETKKSCCSGK.

Residues 1–8 constitute a propeptide that is removed on maturation; that stretch reads MFSELINF. Cu cation contacts are provided by cysteine 15, cysteine 17, cysteine 19, cysteine 22, and cysteine 28. Lysine 30 is covalently cross-linked (Glycyl lysine isopeptide (Lys-Gly) (interchain with G-Cter in ubiquitin)). Cysteine 32, cysteine 34, cysteine 38, cysteine 44, and cysteine 46 together coordinate Cu cation. Positions 37-61 are disordered; that stretch reads GCNSDDKCPCGNKSEETKKSCCSGK. Positions 40 to 55 are enriched in basic and acidic residues; sequence SDDKCPCGNKSEETKK.

The protein belongs to the metallothionein superfamily. Type 12 family.

In terms of biological role, protects the cell against copper toxicity by tightly chelating copper ions. May also act as a depository for copper designated for the effective transfer into the apo forms of copper proteins. This Saccharomyces cerevisiae (strain ATCC 204508 / S288c) (Baker's yeast) protein is Copper metallothionein 1-1 (CUP1-1).